A 139-amino-acid chain; its full sequence is D-ribose pyranase (139 aa).

Histidine 20 serves as the catalytic Proton donor. Substrate-binding positions include aspartate 28, histidine 106, and 128–130 (YAN).

Belongs to the RbsD / FucU family. RbsD subfamily. Homodecamer.

It localises to the cytoplasm. The enzyme catalyses beta-D-ribopyranose = beta-D-ribofuranose. Its pathway is carbohydrate metabolism; D-ribose degradation; D-ribose 5-phosphate from beta-D-ribopyranose: step 1/2. Functionally, catalyzes the interconversion of beta-pyran and beta-furan forms of D-ribose. The protein is D-ribose pyranase of Escherichia coli O81 (strain ED1a).